The sequence spans 377 residues: Queuine tRNA-ribosyltransferase (377 aa).

D89 acts as the Proton acceptor in catalysis. Substrate contacts are provided by residues 89 to 93, D143, Q188, and G215; that span reads DSGGF. Residues 246 to 252 are RNA binding; the sequence is GVGKPED. Catalysis depends on D265, which acts as the Nucleophile. Residues 270–274 form an RNA binding; important for wobble base 34 recognition region; the sequence is TRNAR. Positions 303, 305, 308, and 334 each coordinate Zn(2+).

This sequence belongs to the queuine tRNA-ribosyltransferase family. Homodimer. Within each dimer, one monomer is responsible for RNA recognition and catalysis, while the other monomer binds to the replacement base PreQ1. Zn(2+) is required as a cofactor.

The catalysed reaction is 7-aminomethyl-7-carbaguanine + guanosine(34) in tRNA = 7-aminomethyl-7-carbaguanosine(34) in tRNA + guanine. It participates in tRNA modification; tRNA-queuosine biosynthesis. In terms of biological role, catalyzes the base-exchange of a guanine (G) residue with the queuine precursor 7-aminomethyl-7-deazaguanine (PreQ1) at position 34 (anticodon wobble position) in tRNAs with GU(N) anticodons (tRNA-Asp, -Asn, -His and -Tyr). Catalysis occurs through a double-displacement mechanism. The nucleophile active site attacks the C1' of nucleotide 34 to detach the guanine base from the RNA, forming a covalent enzyme-RNA intermediate. The proton acceptor active site deprotonates the incoming PreQ1, allowing a nucleophilic attack on the C1' of the ribose to form the product. After dissociation, two additional enzymatic reactions on the tRNA convert PreQ1 to queuine (Q), resulting in the hypermodified nucleoside queuosine (7-(((4,5-cis-dihydroxy-2-cyclopenten-1-yl)amino)methyl)-7-deazaguanosine). This is Queuine tRNA-ribosyltransferase from Acinetobacter baumannii (strain ACICU).